Consider the following 477-residue polypeptide: Acylamidase (477 aa).

Active-site charge relay system residues include K82 and S157. S181 (acyl-ester intermediate) is an active-site residue.

The protein belongs to the amidase family.

The enzyme catalyses a monocarboxylic acid amide + H2O = a monocarboxylate + NH4(+). It catalyses the reaction an anilide + H2O = aniline + a carboxylate + H(+). The catalysed reaction is an N-acyl-L-amino acid + H2O = an L-alpha-amino acid + a carboxylate. It carries out the reaction an N-acetyl-L-cysteine-S-conjugate + H2O = an S-substituted L-cysteine + acetate. With respect to regulation, amidase activity is completely suppressed by inhibitors of serine proteases (phenylmethylsulfonyl fluoride and diisopropyl fluorophosphate), partially inhibited by copper and mercury ions, but is not affected by inhibitors of aliphatic amidases (acetaldehyde and nitrophenyl disulfides) or by EDTA. Functionally, amidase with broad substrate specificity, catalyzing the hydrolysis of a wide range of N-substituted amides, and, to a lesser extent, the hydrolysis of non-substituted amides. Acid para-nitroanilides (4'-nitroacetanilide, Gly-pNA, Ala-pNA, Leu-pNA) are the best substrates for this enzyme. N-substituted acrylamides (isopropyl acrylamide, N,N-dimethyl-aminopropyl acrylamide, and methylene-bis-acrylamide), N-acetyl derivatives of glycine, alanine and leucine, and aliphatic amides (acetamide, acrylamide, isobutyramide, n-butyramide, and valeramide) can also be used as substrates but with less efficiency. This Rhodococcus erythropolis (Arthrobacter picolinophilus) protein is Acylamidase.